A 362-amino-acid chain; its full sequence is Beta-ketoacyl-[acyl-carrier-protein] synthase III 2 (362 aa).

Active-site residues include cysteine 113 and histidine 251. An ACP-binding region spans residues 252-256 (QANIR). Asparagine 281 is a catalytic residue.

It belongs to the thiolase-like superfamily. FabH family. As to quaternary structure, homodimer.

It localises to the cytoplasm. The catalysed reaction is malonyl-[ACP] + acetyl-CoA + H(+) = 3-oxobutanoyl-[ACP] + CO2 + CoA. It functions in the pathway lipid metabolism; fatty acid biosynthesis. Its function is as follows. Catalyzes the condensation reaction of fatty acid synthesis by the addition to an acyl acceptor of two carbons from malonyl-ACP. Catalyzes the first condensation reaction which initiates fatty acid synthesis and may therefore play a role in governing the total rate of fatty acid production. Possesses both acetoacetyl-ACP synthase and acetyl transacylase activities. Its substrate specificity determines the biosynthesis of branched-chain and/or straight-chain of fatty acids. The chain is Beta-ketoacyl-[acyl-carrier-protein] synthase III 2 from Vibrio vulnificus (strain CMCP6).